A 218-amino-acid polypeptide reads, in one-letter code: Thiamine-phosphate synthase (218 aa).

4-amino-2-methyl-5-(diphosphooxymethyl)pyrimidine is bound by residues 43 to 47 (QLRDK) and N75. Mg(2+) is bound by residues D76 and D95. S114 contacts 4-amino-2-methyl-5-(diphosphooxymethyl)pyrimidine. Position 141–143 (141–143 (TPT)) interacts with 2-[(2R,5Z)-2-carboxy-4-methylthiazol-5(2H)-ylidene]ethyl phosphate. K144 is a 4-amino-2-methyl-5-(diphosphooxymethyl)pyrimidine binding site. G172 lines the 2-[(2R,5Z)-2-carboxy-4-methylthiazol-5(2H)-ylidene]ethyl phosphate pocket.

Belongs to the thiamine-phosphate synthase family. It depends on Mg(2+) as a cofactor.

It carries out the reaction 2-[(2R,5Z)-2-carboxy-4-methylthiazol-5(2H)-ylidene]ethyl phosphate + 4-amino-2-methyl-5-(diphosphooxymethyl)pyrimidine + 2 H(+) = thiamine phosphate + CO2 + diphosphate. The enzyme catalyses 2-(2-carboxy-4-methylthiazol-5-yl)ethyl phosphate + 4-amino-2-methyl-5-(diphosphooxymethyl)pyrimidine + 2 H(+) = thiamine phosphate + CO2 + diphosphate. The catalysed reaction is 4-methyl-5-(2-phosphooxyethyl)-thiazole + 4-amino-2-methyl-5-(diphosphooxymethyl)pyrimidine + H(+) = thiamine phosphate + diphosphate. It functions in the pathway cofactor biosynthesis; thiamine diphosphate biosynthesis; thiamine phosphate from 4-amino-2-methyl-5-diphosphomethylpyrimidine and 4-methyl-5-(2-phosphoethyl)-thiazole: step 1/1. Functionally, condenses 4-methyl-5-(beta-hydroxyethyl)thiazole monophosphate (THZ-P) and 2-methyl-4-amino-5-hydroxymethyl pyrimidine pyrophosphate (HMP-PP) to form thiamine monophosphate (TMP). This chain is Thiamine-phosphate synthase, found in Thermobifida fusca (strain YX).